Consider the following 657-residue polypeptide: UvrABC system protein B (657 aa).

Residues 23 to 414 (KSIKKGNKYQ…KENIFHQIMR (392 aa)) enclose the Helicase ATP-binding domain. Residue 36-43 (GVTGSGKT) coordinates ATP. The short motif at 89–112 (YYDYYQPEAYIPRTDVFIEKDSST) is the Beta-hairpin element. The region spanning 431-593 (QVEILFDEAK…ITPTSVKRHI (163 aa)) is the Helicase C-terminal domain. The 36-residue stretch at 622 to 657 (AKLAKELRKQMLEAAKALEFEKAAAIRDEINKLRDL) folds into the UVR domain.

The protein belongs to the UvrB family. As to quaternary structure, forms a heterotetramer with UvrA during the search for lesions. Interacts with UvrC in an incision complex.

The protein resides in the cytoplasm. The UvrABC repair system catalyzes the recognition and processing of DNA lesions. A damage recognition complex composed of 2 UvrA and 2 UvrB subunits scans DNA for abnormalities. Upon binding of the UvrA(2)B(2) complex to a putative damaged site, the DNA wraps around one UvrB monomer. DNA wrap is dependent on ATP binding by UvrB and probably causes local melting of the DNA helix, facilitating insertion of UvrB beta-hairpin between the DNA strands. Then UvrB probes one DNA strand for the presence of a lesion. If a lesion is found the UvrA subunits dissociate and the UvrB-DNA preincision complex is formed. This complex is subsequently bound by UvrC and the second UvrB is released. If no lesion is found, the DNA wraps around the other UvrB subunit that will check the other stand for damage. In Campylobacter jejuni (strain RM1221), this protein is UvrABC system protein B.